Consider the following 174-residue polypeptide: RNA pyrophosphohydrolase (174 aa).

The 144-residue stretch at 6-149 (GYRPNVGIIL…KRDVYLEALK (144 aa)) folds into the Nudix hydrolase domain. The Nudix box signature appears at 38–59 (GGIKPGESPETAMYRELYEEVG).

The protein belongs to the Nudix hydrolase family. RppH subfamily. It depends on a divalent metal cation as a cofactor.

Accelerates the degradation of transcripts by removing pyrophosphate from the 5'-end of triphosphorylated RNA, leading to a more labile monophosphorylated state that can stimulate subsequent ribonuclease cleavage. This is RNA pyrophosphohydrolase from Neisseria gonorrhoeae (strain ATCC 700825 / FA 1090).